The sequence spans 20 residues: VSAEYLERQGPKDDXDCFDD.

The segment at 1 to 20 (VSAEYLERQGPKDDXDCFDD) is disordered.

Functionally, possible 'checkpoint' protein for cell division in the blooming process. The sequence is that of Blooming-related protein 2 from Prorocentrum triestinum (Red tide alga).